A 364-amino-acid polypeptide reads, in one-letter code: DNA replication and repair protein RecF (364 aa).

30 to 37 (GNNGMGKT) serves as a coordination point for ATP.

This sequence belongs to the RecF family.

It localises to the cytoplasm. The RecF protein is involved in DNA metabolism; it is required for DNA replication and normal SOS inducibility. RecF binds preferentially to single-stranded, linear DNA. It also seems to bind ATP. This is DNA replication and repair protein RecF from Porphyromonas gingivalis (strain ATCC 33277 / DSM 20709 / CIP 103683 / JCM 12257 / NCTC 11834 / 2561).